The chain runs to 168 residues: Ribosome-binding factor A (168 aa).

Residues 125 to 138 (RVREGAKHAGDSDP) show a composition bias toward basic and acidic residues. Residues 125–168 (RVREGAKHAGDSDPYRVLGEGDLEGPATGGPDVEDEGGANSHDR) are disordered.

It belongs to the RbfA family. Monomer. Binds 30S ribosomal subunits, but not 50S ribosomal subunits or 70S ribosomes.

The protein resides in the cytoplasm. In terms of biological role, one of several proteins that assist in the late maturation steps of the functional core of the 30S ribosomal subunit. Associates with free 30S ribosomal subunits (but not with 30S subunits that are part of 70S ribosomes or polysomes). Required for efficient processing of 16S rRNA. May interact with the 5'-terminal helix region of 16S rRNA. The sequence is that of Ribosome-binding factor A from Mycolicibacterium gilvum (strain PYR-GCK) (Mycobacterium gilvum (strain PYR-GCK)).